The following is a 114-amino-acid chain: Fumarate reductase subunit D (114 aa).

The next 3 membrane-spanning stretches (helical) occupy residues 25 to 45, 50 to 70, and 94 to 114; these read SGLAFPVLILILGILLPFGII, IIAFSHHWFGKLVILALTIFP, and LIFYGLAAVYSFIVLFAVIAI.

Belongs to the FrdD family. In terms of assembly, part of an enzyme complex containing four subunits: a flavoprotein (FrdA), an iron-sulfur protein (FrdB), and two hydrophobic anchor proteins (FrdC and FrdD).

It localises to the cell inner membrane. Functionally, anchors the catalytic components of the fumarate reductase complex to the cell membrane, binds quinones. The chain is Fumarate reductase subunit D from Mannheimia succiniciproducens (strain KCTC 0769BP / MBEL55E).